Here is a 693-residue protein sequence, read N- to C-terminus: Sodium-dependent phosphate transport protein 2B (693 aa).

The disordered stretch occupies residues 1-46 (MAPWPELENSQPTSEKYTVKADGEQSAKPEKAKETEKDDTGTPITK). Residues 1–89 (MAPWPELENS…KWSERDTKGK (89 aa)) lie on the Cytoplasmic side of the membrane. The segment covering 17 to 40 (YTVKADGEQSAKPEKAKETEKDDT) has biased composition (basic and acidic residues). Residues 90–110 (ILCVFQGIGKFILLLVFLYFF) traverse the membrane as a helical segment. Residues 111–135 (VCSLDVLSSAFQLVGGKVAGKFFNN) are Extracellular-facing. The chain crosses the membrane as a helical span at residues 136–156 (NSIMSNPLAGMVIGVLVTVLV). Over 157–212 (QSSSTSTSIVVSMVASSLLPVHAAIPIIMGANIGTSITNTIVALMQAGDRKEFRRA) the chain is Cytoplasmic. A helical membrane pass occupies residues 213-233 (FAGATVHDFFNWLSVLVLLPL). At 234-361 (EAATGYLERL…IFVNFNLSDA (128 aa)) the chain is on the extracellular side. Cysteines 302 and 349 form a disulfide. N-linked (GlcNAc...) asparagine glycans are attached at residues Asn-307 and Asn-320. The helical transmembrane segment at 362-382 (IVGTILLITSLLILCTCLILI) threads the bilayer. Topologically, residues 383–408 (VKLLGSVLRGQVAAVIKKTINTDFPY) are cytoplasmic. A helical membrane pass occupies residues 409–429 (PFSWVTGYLAILVGAGMTFIV). Residues 430 to 485 (QSSSVFTSAMTPLIGIGVISIQRAYPLTLGANIGTTTTAILAALASPGSTLKSSLQ) lie on the Extracellular side of the membrane. The chain crosses the membrane as a helical span at residues 486 to 506 (IALCHFFFNISGIILWYPIPF). At 507-525 (TRLPIRLAKGLGNISSKYR) the chain is on the cytoplasmic side. The chain crosses the membrane as a helical span at residues 526–546 (WFAIVYLIVFFLLIPLAVFGL). At 547–550 (SLIG) the chain is on the extracellular side. A helical transmembrane segment spans residues 551-571 (WPVLVGVASPIVLVILLVVVL). Topologically, residues 572–693 (KILQSFCPGS…TKIVSSVTAL (122 aa)) are cytoplasmic.

The protein belongs to the SLC34A transporter family. Glycosylated.

The protein localises to the apical cell membrane. The enzyme catalyses 3 Na(+)(out) + phosphate(out) = 3 Na(+)(in) + phosphate(in). Functionally, involved in actively transporting phosphate into cells via Na(+) cotransport. This is Sodium-dependent phosphate transport protein 2B (SLC34A2) from Bos taurus (Bovine).